The sequence spans 751 residues: Disintegrin and metalloproteinase domain-containing protein 2 (751 aa).

The N-terminal stretch at 1–16 (MLRVLFLLCGLSGLRT) is a signal peptide. Positions 17-173 (KENSERLHVQ…PYKVQSVQPR (157 aa)) are excised as a propeptide. Topologically, residues 17-702 (KENSERLHVQ…DVYQTAKPTR (686 aa)) are extracellular. 4 N-linked (GlcNAc...) asparagine glycosylation sites follow: Asn-122, Asn-147, Asn-219, and Asn-289. The Peptidase M12B domain maps to 177–374 (QYIEMHVVVE…QKSQCLQNLP (198 aa)). 3 disulfides stabilise this stretch: Cys-286-Cys-369, Cys-328-Cys-353, and Cys-330-Cys-335. N-linked (GlcNAc...) asparagine glycosylation is found at Asn-352, Asn-434, Asn-458, Asn-559, and Asn-566. The Disintegrin domain occupies 383-472 (DAVCGNSIVE…LCPDDIVIQN (90 aa)). Residues Cys-444 and Cys-464 are joined by a disulfide bond. The 34-residue stretch at 612–645 (VNLGCTLQNCNNQGICNSLQHCHCNPTFLPPNCS) folds into the EGF-like domain. 3 disulfides stabilise this stretch: Cys-616–Cys-627, Cys-621–Cys-633, and Cys-635–Cys-644. Asn-643 is a glycosylation site (N-linked (GlcNAc...) asparagine). Residues 703-723 (WPFFLLIPFFIILGALIAILV) traverse the membrane as a helical segment. The Cytoplasmic segment spans residues 724-751 (KVQFQRKKWKTEDYTSDEQFESDSELKE). Residue Ser-745 is modified to Phosphoserine.

As to quaternary structure, heterodimer with ADAM1/fertilin subunit alpha. Post-translationally, the signal and the metalloprotease domain are cleaved during the epididymal maturation of the spermatozoa. Expressed specifically in testis.

It localises to the membrane. Sperm surface membrane protein that may be involved in sperm-egg plasma membrane adhesion and fusion during fertilization. Could have a direct role in sperm-zona binding or migration of sperm from the uterus into the oviduct. Interactions with egg membrane could be mediated via binding between its disintegrin-like domain to one or more integrins receptors on the egg. This is a non catalytic metalloprotease-like protein. The polypeptide is Disintegrin and metalloproteinase domain-containing protein 2 (ADAM2) (Oryctolagus cuniculus (Rabbit)).